We begin with the raw amino-acid sequence, 74 residues long: U3-agatoxin-Ao1h (74 aa).

Positions 1-20 (MRAIISLLLISTMVFGVIEA) are cleaved as a signal peptide. Residues 21–34 (VSVQKSLKIFEGER) constitute a propeptide that is removed on maturation. 4 disulfides stabilise this stretch: C37–C53, C44–C58, C52–C68, and C60–C66. N72 carries the post-translational modification Asparagine amide.

Belongs to the neurotoxin 07 (Beta/delta-agtx) family. 03 (aga-4) subfamily. Aga sub-subfamily. Expressed by the venom gland.

The protein localises to the secreted. Insecticidal neurotoxin that induces an irreversible spastic paralysis when injected into insects. Modifies presynaptic voltage-gated sodium channels (Nav), causing them to open at the normal resting potential of the nerve. This leads to spontaneous release of neurotransmitter and repetitive action potentials in motor neurons. The sequence is that of U3-agatoxin-Ao1h from Agelena orientalis (Funnel-web spider).